Consider the following 472-residue polypeptide: Adenosylhomocysteinase (472 aa).

Thr-64, Asp-138, and Glu-198 together coordinate substrate. 199–201 provides a ligand contact to NAD(+); sequence TTT. Substrate is bound by residues Lys-228 and Asp-232. Residues Asn-233, 262–267, Glu-285, Asn-320, 341–343, and Asn-386 contribute to the NAD(+) site; these read GFGDVG and IGH.

It belongs to the adenosylhomocysteinase family. It depends on NAD(+) as a cofactor.

Its subcellular location is the cytoplasm. It carries out the reaction S-adenosyl-L-homocysteine + H2O = L-homocysteine + adenosine. It participates in amino-acid biosynthesis; L-homocysteine biosynthesis; L-homocysteine from S-adenosyl-L-homocysteine: step 1/1. Functionally, may play a key role in the regulation of the intracellular concentration of adenosylhomocysteine. The chain is Adenosylhomocysteinase from Prochlorococcus marinus (strain MIT 9215).